We begin with the raw amino-acid sequence, 275 residues long: 4-hydroxy-tetrahydrodipicolinate reductase (275 aa).

Residues 13 to 18 (GAAGKM), 108 to 110 (GTT), and 134 to 137 (APNF) contribute to the NAD(+) site. Residue H164 is the Proton donor/acceptor of the active site. H165 is a binding site for (S)-2,3,4,5-tetrahydrodipicolinate. K168 serves as the catalytic Proton donor. 174–175 (GT) contacts (S)-2,3,4,5-tetrahydrodipicolinate.

The protein belongs to the DapB family.

It is found in the cytoplasm. It carries out the reaction (S)-2,3,4,5-tetrahydrodipicolinate + NAD(+) + H2O = (2S,4S)-4-hydroxy-2,3,4,5-tetrahydrodipicolinate + NADH + H(+). It catalyses the reaction (S)-2,3,4,5-tetrahydrodipicolinate + NADP(+) + H2O = (2S,4S)-4-hydroxy-2,3,4,5-tetrahydrodipicolinate + NADPH + H(+). It participates in amino-acid biosynthesis; L-lysine biosynthesis via DAP pathway; (S)-tetrahydrodipicolinate from L-aspartate: step 4/4. Functionally, catalyzes the conversion of 4-hydroxy-tetrahydrodipicolinate (HTPA) to tetrahydrodipicolinate. The chain is 4-hydroxy-tetrahydrodipicolinate reductase from Synechocystis sp. (strain ATCC 27184 / PCC 6803 / Kazusa).